The primary structure comprises 268 residues: Probable membrane transporter protein HI_0806 (268 aa).

8 helical membrane-spanning segments follow: residues 6-26, 46-66, 79-99, 101-121, 147-167, 178-198, 212-232, and 248-268; these read IFIL…FGIG, VISA…LLFF, ILWS…SFYF, TAII…KTFL, GGGL…APLV, IAVY…YGYL, LGLN…MSFF, and LLAI…FVFH.

This sequence belongs to the 4-toluene sulfonate uptake permease (TSUP) (TC 2.A.102) family.

Its subcellular location is the cell membrane. The protein is Probable membrane transporter protein HI_0806 of Haemophilus influenzae (strain ATCC 51907 / DSM 11121 / KW20 / Rd).